Reading from the N-terminus, the 500-residue chain is Trans-cinnamate 4-monooxygenase (500 aa).

A helical transmembrane segment spans residues 3 to 23 (ALLVEKVLLGLFVAAVLALVV). (E)-cinnamate contacts are provided by residues 213–218 (RSRLSQ) and Ala-302. Heme is bound at residue Cys-442.

The protein belongs to the cytochrome P450 family. Heme serves as cofactor. As to expression, expressed in roots and leaves.

It is found in the membrane. The enzyme catalyses (E)-cinnamate + reduced [NADPH--hemoprotein reductase] + O2 = (E)-4-coumarate + oxidized [NADPH--hemoprotein reductase] + H2O + H(+). Its pathway is phenylpropanoid metabolism; trans-4-coumarate biosynthesis; trans-4-coumarate from trans-cinnamate: step 1/1. Functionally, catalyzes the first oxidative step of the phenylpropanoid pathway in higher plants by transforming trans-cinnamate into p-coumarate. The compounds formed by this pathway are essential components for lignification, pollination, and defense against ultraviolet light, predators and pathogens. The chain is Trans-cinnamate 4-monooxygenase from Oryza sativa subsp. japonica (Rice).